The primary structure comprises 86 residues: U13-theraphotoxin-Cg1b (86 aa).

The signal sequence occupies residues 1 to 21; it reads MKVSVLITLAVLGVMFVWASA. Positions 22 to 51 are excised as a propeptide; it reads AELEQSGSDQKDSPAWLKSMERIFQSEERE. 3 disulfide bridges follow: cysteine 52–cysteine 66, cysteine 59–cysteine 71, and cysteine 65–cysteine 78.

Belongs to the neurotoxin 10 (Hwtx-1) family. 41 (Jztx-36) subfamily. As to expression, expressed by the venom gland.

It localises to the secreted. Its function is as follows. Probable ion channel inhibitor. The chain is U13-theraphotoxin-Cg1b from Chilobrachys guangxiensis (Chinese earth tiger tarantula).